A 475-amino-acid chain; its full sequence is 23S rRNA (uracil(1939)-C(5))-methyltransferase RlmD (475 aa).

In terms of domain architecture, TRAM spans 1–76 (MHRGDKPVNI…SRFSKAKVRE (76 aa)). Cysteine 89, cysteine 95, cysteine 98, and cysteine 178 together coordinate [4Fe-4S] cluster. The S-adenosyl-L-methionine site is built by glutamine 299, phenylalanine 328, asparagine 333, glutamate 349, aspartate 377, and aspartate 398. Catalysis depends on cysteine 431, which acts as the Nucleophile.

This sequence belongs to the class I-like SAM-binding methyltransferase superfamily. RNA M5U methyltransferase family. RlmD subfamily.

The catalysed reaction is uridine(1939) in 23S rRNA + S-adenosyl-L-methionine = 5-methyluridine(1939) in 23S rRNA + S-adenosyl-L-homocysteine + H(+). Its function is as follows. Catalyzes the formation of 5-methyl-uridine at position 1939 (m5U1939) in 23S rRNA. The polypeptide is 23S rRNA (uracil(1939)-C(5))-methyltransferase RlmD (Polynucleobacter necessarius subsp. necessarius (strain STIR1)).